The primary structure comprises 165 residues: MKNRILRPALLCVAALFATTAQADAGHDHGSAHAGAHAHDADTPYGRPGDAAKAQRTVRVVMSDTMRFDPATITVRRGETVRFVAANGGRIEHEFVLGTTASLKAHAQEMRAMPDMQHADPGAVRVAAGASGEIVWQFTKAGSFEFACLIPGHFEAGMVGKVVVR.

The first 23 residues, 1 to 23 (MKNRILRPALLCVAALFATTAQA), serve as a signal peptide directing secretion. Residues 25-42 (AGHDHGSAHAGAHAHDAD) show a composition bias toward basic and acidic residues. The disordered stretch occupies residues 25 to 50 (AGHDHGSAHAGAHAHDADTPYGRPGD). Residues histidine 93, cysteine 148, histidine 153, and methionine 158 each contribute to the Cu(2+) site.

The protein belongs to the CopI family. Monomer.

It is found in the periplasm. In terms of biological role, involved in copper tolerance. Required for copper resistance under both aerobic and anaerobic photosynthetic growth conditions. Binds copper. Could be an important defense against copper in the periplasm and may protect not only c type cytochromes but also other proteins with cysteine residues from copper ions that may catalyze nonnative disulfide bond formation. This is Copper-resistant cuproprotein CopI from Rubrivivax gelatinosus (Rhodocyclus gelatinosus).